Here is a 36-residue protein sequence, read N- to C-terminus: Neurotoxin PRTx26An0C3 (36 aa).

3 disulfides stabilise this stretch: cysteine 3–cysteine 17, cysteine 10–cysteine 22, and cysteine 16–cysteine 34.

As to expression, expressed by the venom gland.

The protein localises to the secreted. Its function is as follows. Neurotoxin. Causes spastic paralysis and death in mice. Moderate inhibitor of L-type calcium channels (Cav1/CACNA1). The sequence is that of Neurotoxin PRTx26An0C3 from Phoneutria nigriventer (Brazilian armed spider).